The chain runs to 356 residues: Holliday junction branch migration complex subunit RuvB (356 aa).

The segment at Thr-4–Tyr-191 is large ATPase domain (RuvB-L). ATP is bound by residues Leu-30, Arg-31, Gly-72, Lys-75, Thr-76, Thr-77, Glu-138–Tyr-140, Arg-181, Tyr-191, and Arg-228. Thr-76 is a Mg(2+) binding site. A small ATPAse domain (RuvB-S) region spans residues Asp-192–Asp-262. The segment at Pro-265–Lys-356 is head domain (RuvB-H). 3 residues coordinate DNA: Arg-301, Arg-320, and Arg-325.

This sequence belongs to the RuvB family. In terms of assembly, homohexamer. Forms an RuvA(8)-RuvB(12)-Holliday junction (HJ) complex. HJ DNA is sandwiched between 2 RuvA tetramers; dsDNA enters through RuvA and exits via RuvB. An RuvB hexamer assembles on each DNA strand where it exits the tetramer. Each RuvB hexamer is contacted by two RuvA subunits (via domain III) on 2 adjacent RuvB subunits; this complex drives branch migration. In the full resolvosome a probable DNA-RuvA(4)-RuvB(12)-RuvC(2) complex forms which resolves the HJ.

The protein resides in the cytoplasm. The catalysed reaction is ATP + H2O = ADP + phosphate + H(+). In terms of biological role, the RuvA-RuvB-RuvC complex processes Holliday junction (HJ) DNA during genetic recombination and DNA repair, while the RuvA-RuvB complex plays an important role in the rescue of blocked DNA replication forks via replication fork reversal (RFR). RuvA specifically binds to HJ cruciform DNA, conferring on it an open structure. The RuvB hexamer acts as an ATP-dependent pump, pulling dsDNA into and through the RuvAB complex. RuvB forms 2 homohexamers on either side of HJ DNA bound by 1 or 2 RuvA tetramers; 4 subunits per hexamer contact DNA at a time. Coordinated motions by a converter formed by DNA-disengaged RuvB subunits stimulates ATP hydrolysis and nucleotide exchange. Immobilization of the converter enables RuvB to convert the ATP-contained energy into a lever motion, pulling 2 nucleotides of DNA out of the RuvA tetramer per ATP hydrolyzed, thus driving DNA branch migration. The RuvB motors rotate together with the DNA substrate, which together with the progressing nucleotide cycle form the mechanistic basis for DNA recombination by continuous HJ branch migration. Branch migration allows RuvC to scan DNA until it finds its consensus sequence, where it cleaves and resolves cruciform DNA. This is Holliday junction branch migration complex subunit RuvB from Burkholderia cenocepacia (strain ATCC BAA-245 / DSM 16553 / LMG 16656 / NCTC 13227 / J2315 / CF5610) (Burkholderia cepacia (strain J2315)).